Consider the following 469-residue polypeptide: Solute carrier family 52, riboflavin transporter, member 3 (469 aa).

Residues 1-2 (MA) lie on the Cytoplasmic side of the membrane. Residues 3–23 (FLMHLLVCVFGMGSWVTINGL) form a helical membrane-spanning segment. The Extracellular segment spans residues 24-43 (WVELPLLVMELPEGWYLPSY). The helical transmembrane segment at 44 to 64 (LTVVIQLANIGPLLVTLLHHF) threads the bilayer. The Cytoplasmic segment spans residues 65–71 (RPSCLSE). A helical membrane pass occupies residues 72–92 (VPIIFTLLGVGTVTCIIFAFL). Residues 93–97 (WNMTS) are Extracellular-facing. The N-linked (GlcNAc...) asparagine glycan is linked to asparagine 94. A helical transmembrane segment spans residues 98 to 118 (WVLDGHHSIAFLVLTFFLALV). Topologically, residues 119 to 137 (DCTSSVTFLPFMSRLPTYY) are cytoplasmic. The chain crosses the membrane as a helical span at residues 138–158 (LTTFFVGEGLSGLLPALVALA). At 159–220 (QGSGLTTCVN…SRYLPAHFSP (62 aa)) the chain is on the extracellular side. Asparagine 168 is a glycosylation site (N-linked (GlcNAc...) asparagine). The chain crosses the membrane as a helical span at residues 221 to 241 (LVFFLLLSIMMACCLVAFFVL). Residues 242–292 (QRQPRCWEASVEDLLNDQVTLHSIRPREENDLGPAGTVDSSQGQGYLEEKA) lie on the Cytoplasmic side of the membrane. Serine 251 is subject to Phosphoserine. Residues 293–313 (APCCPAHLAFIYTLVAFVNAL) traverse the membrane as a helical segment. The Extracellular segment spans residues 314–335 (TNGMLPSVQTYSCLSYGPVAYH). The helical transmembrane segment at 336–356 (LAATLSIVANPLASLVSMFLP) threads the bilayer. At 357–359 (NRS) the chain is on the cytoplasmic side. Residues 360-380 (LLFLGVLSVLGTCFGGYNMAM) traverse the membrane as a helical segment. Residues 381-396 (AVMSPCPLLQGHWGGE) lie on the Extracellular side of the membrane. A disulfide bond links cysteine 386 and cysteine 463. Residues 397 to 417 (VLIVASWVLFSGCLSYVKVML) form a helical membrane-spanning segment. Residues 418–427 (GVVLRDLSRS) lie on the Cytoplasmic side of the membrane. The helical transmembrane segment at 428–448 (ALLWCGAAVQLGSLLGALLMF) threads the bilayer. Residues 449–469 (PLVNVLRLFSSADFCNLHCPA) are Extracellular-facing.

It belongs to the riboflavin transporter family. Predominantly expressed in testis. Highly expressed in small intestine and prostate.

It localises to the apical cell membrane. The protein resides in the cell membrane. Its subcellular location is the nucleus membrane. The protein localises to the cytoplasm. It catalyses the reaction riboflavin(in) = riboflavin(out). Its activity is regulated as follows. Activity is strongly inhibited by riboflavin analogs, such as lumiflavin, flavin mononucleotide (FMN), flavin adenine dinucleotide (FAD), by methylene blue, and to a lesser extent by amiloride. Riboflavin transport is Na(+)-independent at low pH but significantly reduced by Na(+) depletion under neutral pH conditions. Its function is as follows. Plasma membrane transporter mediating the uptake by cells of the water soluble vitamin B2/riboflavin that plays a key role in biochemical oxidation-reduction reactions of the carbohydrate, lipid, and amino acid metabolism. Humans are unable to synthesize vitamin B2/riboflavin and must obtain it via intestinal absorption. The sequence is that of Solute carrier family 52, riboflavin transporter, member 3 (SLC52A3) from Homo sapiens (Human).